A 412-amino-acid polypeptide reads, in one-letter code: Cathepsin D (412 aa).

The N-terminal stretch at 1–20 (MQPSSLLPLALCLLAAPASA) is a signal peptide. Residues 21-64 (LVRIPLHKFTSIRRTMSEVGGSVEDLIAKGPVSKYSQAVPAVTE) constitute a propeptide, activation peptide. The O-linked (GalNAc...) threonine glycan is linked to T63. Positions 79–407 (YYGEIGIGTP…DRDNNRVGFA (329 aa)) constitute a Peptidase A1 domain. Disulfide bonds link C91-C160 and C110-C117. The active site involves D97. N134 and N263 each carry an N-linked (GlcNAc...) asparagine glycan. Cysteines 286 and 290 form a disulfide. D295 is an active-site residue. Cysteines 329 and 366 form a disulfide.

This sequence belongs to the peptidase A1 family. As to quaternary structure, consists of a light chain and a heavy chain. Interacts with ADAM30; this leads to activation of CTSD. Interacts with GRN; stabilizes CTSD; increases its proteolytic activity. Post-translationally, N- and O-glycosylated. In terms of processing, undergoes proteolytic cleavage and activation by ADAM30. As well as the major heavy chain which starts at Leu-169, 2 minor forms starting at Gly-170 and Gly-171 have been identified. An additional form starting at Ala-168 has also been identified. In terms of tissue distribution, expressed in the aorta extracellular space (at protein level). Expressed in liver (at protein level).

Its subcellular location is the lysosome. The protein resides in the melanosome. It localises to the secreted. The protein localises to the extracellular space. It catalyses the reaction Specificity similar to, but narrower than, that of pepsin A. Does not cleave the 4-Gln-|-His-5 bond in B chain of insulin.. Its function is as follows. Acid protease active in intracellular protein breakdown. Plays a role in APP processing following cleavage and activation by ADAM30 which leads to APP degradation. Involved in the pathogenesis of several diseases such as breast cancer and possibly Alzheimer disease. In Homo sapiens (Human), this protein is Cathepsin D (CTSD).